The following is a 458-amino-acid chain: Hepatocyte nuclear factor 3-beta (458 aa).

The transactivation domain 1 stretch occupies residues 14–93 (DWSSYYAEPE…AGAMAGMSGS (80 aa)). The Nuclear localization signal signature appears at 106–113 (LSPSLSPL). At T156 the chain carries Phosphothreonine; by PKB/AKT1. The fork-head DNA-binding region spans 159–252 (KPPYSYISLI…ENGCYLRRQK (94 aa)). Phosphoserine occurs at positions 212 and 283. Residues 286–365 (QLGEAAGSAS…PGLPPEAHLK (80 aa)) are disordered. The span at 294-310 (ASETPAGTESPHSSASP) shows a compositional bias: polar residues. T301 carries the phosphothreonine modification. S303, S306, S307, and S309 each carry phosphoserine. Low complexity predominate over residues 339 to 352 (PGQQQQAAAHLLGP). The segment at 361 to 458 (EAHLKPEHHY…VYSRPIMNSS (98 aa)) is transactivation domain 2. Residues S437 and S458 each carry the phosphoserine modification.

In terms of assembly, binds DNA as a monomer. Binds TLE1. Interacts with FOXA1 and FOXA3. Interacts with PRKDC. Interacts with AKT1. Interacts with TET1; this interaction may recruit TET1 to specific genomic loci to mediate their demethylation. Post-translationally, phosphorylation on Thr-156 abolishes binding to target promoters and subsequent transcription activation upon insulin stimulation. Liver.

It localises to the nucleus. The protein localises to the cytoplasm. Its function is as follows. Transcription factor that is involved in embryonic development, establishment of tissue-specific gene expression and regulation of gene expression in differentiated tissues. Is thought to act as a 'pioneer' factor opening the compacted chromatin for other proteins through interactions with nucleosomal core histones and thereby replacing linker histones at target enhancer and/or promoter sites. Binds DNA with the consensus sequence 5'-[AC]A[AT]T[AG]TT[GT][AG][CT]T[CT]-3'. In embryonic development is required for notochord formation. Involved in the development of multiple endoderm-derived organ systems such as the liver, pancreas and lungs; FOXA1 and FOXA2 seem to have at least in part redundant roles. Originally described as a transcription activator for a number of liver genes such as AFP, albumin, tyrosine aminotransferase, PEPCK, etc. Interacts with the cis-acting regulatory regions of these genes. Involved in glucose homeostasis; regulates the expression of genes important for glucose sensing in pancreatic beta-cells and glucose homeostasis. Involved in regulation of fat metabolism. Acts synergistically with ONECUT1 to activate transcription of female-specific CYP2C12; the function is inhibited by growth hormone-activated STAT5B. Acts synergistically with HNF4A to activate transcription of APOA1. The polypeptide is Hepatocyte nuclear factor 3-beta (Foxa2) (Rattus norvegicus (Rat)).